The primary structure comprises 585 residues: Glutathione S-transferase C-terminal domain-containing protein homolog (585 aa).

A GST C-terminal domain is found at 120 to 275 (LGFKGSCLLA…DKCARVLRDL (156 aa)).

Belongs to the GSTCD family.

The sequence is that of Glutathione S-transferase C-terminal domain-containing protein homolog from Drosophila melanogaster (Fruit fly).